The following is a 498-amino-acid chain: Ribosomal RNA small subunit methyltransferase G 2 (498 aa).

The tract at residues 1 to 230 is methyltransferase G; sequence MRNGTIRYPG…FQRLGPPTRI (230 aa). S-adenosyl-L-methionine-binding residues include Gly-89, Met-94, and Arg-154. The tract at residues 231–498 is methyltransferase TrmH family; that stretch reads RKETAMKRHG…SQTKHSPAPA (268 aa).

In the N-terminal section; belongs to the methyltransferase superfamily. RNA methyltransferase RsmG family. This sequence in the C-terminal section; belongs to the class IV-like SAM-binding methyltransferase superfamily. RNA methyltransferase TrmH family.

It localises to the cytoplasm. It carries out the reaction guanosine(527) in 16S rRNA + S-adenosyl-L-methionine = N(7)-methylguanosine(527) in 16S rRNA + S-adenosyl-L-homocysteine. Functionally, specifically methylates the N7 position of guanine in position 527 of 16S rRNA. In Syntrophobacter fumaroxidans (strain DSM 10017 / MPOB), this protein is Ribosomal RNA small subunit methyltransferase G 2 (rsmG2).